The chain runs to 328 residues: Tetraacyldisaccharide 4'-kinase (328 aa).

55–62 (TAGGNGKT) is a binding site for ATP.

The protein belongs to the LpxK family.

The catalysed reaction is a lipid A disaccharide + ATP = a lipid IVA + ADP + H(+). The protein operates within glycolipid biosynthesis; lipid IV(A) biosynthesis; lipid IV(A) from (3R)-3-hydroxytetradecanoyl-[acyl-carrier-protein] and UDP-N-acetyl-alpha-D-glucosamine: step 6/6. Functionally, transfers the gamma-phosphate of ATP to the 4'-position of a tetraacyldisaccharide 1-phosphate intermediate (termed DS-1-P) to form tetraacyldisaccharide 1,4'-bis-phosphate (lipid IVA). This Escherichia coli (strain 55989 / EAEC) protein is Tetraacyldisaccharide 4'-kinase.